Consider the following 198-residue polypeptide: Patulin synthesis protein F (198 aa).

The N-terminal stretch at 1-18 (MRLSTVLLGSLLGALTQA) is a signal peptide. Asn-128 and Asn-184 each carry an N-linked (GlcNAc...) asparagine glycan.

It belongs to the patF family.

Its subcellular location is the cytoplasm. The protein localises to the cytosol. The catalysed reaction is phyllostine = neopatulin. The protein operates within mycotoxin biosynthesis; patulin biosynthesis. Its function is as follows. Part of the gene cluster that mediates the biosynthesis of patulin, an acetate-derived tetraketide mycotoxin produced by several fungal species that shows antimicrobial properties against several bacteria. PatF catalyzes the conversion of phyllostine into neopatulin. The pathway begins with the synthesis of 6-methylsalicylic acid by the polyketide synthase (PKS) patK via condensation of acetate and malonate units. The 6-methylsalicylic acid decarboxylase patG then catalyzes the decarboxylation of 6-methylsalicylic acid to yield m-cresol (also known as 3-methylphenol). These first reactions occur in the cytosol. The intermediate m-cresol is then transported into the endoplasmic reticulum where the cytochrome P450 monooxygenase patH converts it to m-hydroxybenzyl alcohol, which is further converted to gentisyl alcohol by the cytochrome P450 monooxygenase patI. The oxidoreductases patJ and patO further convert gentisyl alcohol to isoepoxydon in the vacuole. PatN catalyzes then the transformation of isoepoxydon into phyllostine. The cluster protein patF is responsible for the conversion from phyllostine to neopatulin whereas the alcohol dehydrogenase patD converts neopatulin to E-ascladiol. The steps between isoepoxydon and E-ascladiol occur in the cytosol, and E-ascladiol is probably secreted to the extracellular space by one of the cluster-specific transporters patC or patM. Finally, the secreted patulin synthase patE catalyzes the conversion of E-ascladiol to patulin. The chain is Patulin synthesis protein F from Aspergillus clavatus (strain ATCC 1007 / CBS 513.65 / DSM 816 / NCTC 3887 / NRRL 1 / QM 1276 / 107).